The chain runs to 375 residues: Alcohol dehydrogenase 1 (375 aa).

Serine 2 carries the N-acetylserine modification. The Zn(2+) site is built by cysteine 47, histidine 68, cysteine 98, cysteine 101, cysteine 104, cysteine 112, and cysteine 175. Residues 200 to 205 (WSGRVG), aspartate 224, and lysine 229 each bind NAD(+). Position 234 is an N6-succinyllysine (lysine 234). 293–295 (VGV) contacts NAD(+). Lysine 340 carries the post-translational modification N6-succinyllysine. Arginine 370 serves as a coordination point for NAD(+).

The protein belongs to the zinc-containing alcohol dehydrogenase family. Class-I subfamily. Homodimer. It depends on Zn(2+) as a cofactor.

The protein resides in the cytoplasm. It carries out the reaction a primary alcohol + NAD(+) = an aldehyde + NADH + H(+). It catalyses the reaction a secondary alcohol + NAD(+) = a ketone + NADH + H(+). This Geomys bursarius (Plains pocket gopher) protein is Alcohol dehydrogenase 1 (ADH1).